The following is a 164-amino-acid chain: Putative Cys-tRNA(Pro)/Cys-tRNA(Cys) deacylase EbsC (164 aa).

The protein belongs to the prolyl-tRNA editing family. YbaK/EbsC subfamily.

Affects the expression of the receptor, named binding substance, that mediates mating aggregate formation. Could be a regulatory protein that suppresses the function or expression of ebsA and/or ebsMB. This chain is Putative Cys-tRNA(Pro)/Cys-tRNA(Cys) deacylase EbsC, found in Enterococcus faecalis (strain ATCC 700802 / V583).